A 193-amino-acid polypeptide reads, in one-letter code: Protein SPEAR3 (193 aa).

Disordered stretches follow at residues 1-50 and 85-104; these read MGSS…GVAQ and GYPS…SSPP. Positions 14–26 are enriched in low complexity; it reads SSSSSPTSSSSSP. The short motif at 44-52 is the SPL element; it reads RGLGVAQLE. The segment covering 86-101 has biased composition (low complexity); it reads YPSIPSSSPSFSYASS. Residues 187–193 carry the EAR motif; it reads LDLELRL.

In terms of assembly, interacts with TPL and the TPR corepressors TPR1, TPR2, TPR3, TPR4, and with the TCP transcription factors TCP2, TCP3, TCP4, TCP5, TCP10, TCP13, TCP17 and TCP24. Interacts with SPL and SPEAR2. As to expression, expressed in shoot apical meristem, cotyledons and leaves. Detected at the leaf margins and in the vascular bundles at the base of the leaves.

The protein resides in the nucleus. Functionally, transcriptional regulator of leaf development. Acts as an adapter-like transcriptional repressor recruiting TPL/TPR corepressors to inhibit the CIN-like TCP transcription factors. This Arabidopsis thaliana (Mouse-ear cress) protein is Protein SPEAR3.